The following is a 108-amino-acid chain: MPESDTRTIHHVDAHVGQRVRQRRTALILDQETLARRIGVSFQQIQKYERGRNRISASRLYDIAKALAVPIDYFFSDLERGDPRHDGLWPRTWGAWPKAGAPRPIRCA.

The HTH cro/C1-type domain maps to 20 to 74 (VRQRRTALILDQETLARRIGVSFQQIQKYERGRNRISASRLYDIAKALAVPIDYF). Positions 31-50 (QETLARRIGVSFQQIQKYER) form a DNA-binding region, H-T-H motif.

This is an uncharacterized protein from Rhodospirillum rubrum.